The chain runs to 371 residues: Chorismate synthase (371 aa).

2 residues coordinate NADP(+): Arg-48 and Arg-54. FMN-binding positions include Arg-130–Ser-132, Asn-242–Ala-243, Gly-287, Lys-302–Ser-306, and Arg-328.

It belongs to the chorismate synthase family. In terms of assembly, homotetramer. FMNH2 serves as cofactor.

It catalyses the reaction 5-O-(1-carboxyvinyl)-3-phosphoshikimate = chorismate + phosphate. It functions in the pathway metabolic intermediate biosynthesis; chorismate biosynthesis; chorismate from D-erythrose 4-phosphate and phosphoenolpyruvate: step 7/7. In terms of biological role, catalyzes the anti-1,4-elimination of the C-3 phosphate and the C-6 proR hydrogen from 5-enolpyruvylshikimate-3-phosphate (EPSP) to yield chorismate, which is the branch point compound that serves as the starting substrate for the three terminal pathways of aromatic amino acid biosynthesis. This reaction introduces a second double bond into the aromatic ring system. This is Chorismate synthase from Azorhizobium caulinodans (strain ATCC 43989 / DSM 5975 / JCM 20966 / LMG 6465 / NBRC 14845 / NCIMB 13405 / ORS 571).